Consider the following 1235-residue polypeptide: MMDNDDALLNNGGPQSGAETVYGTEDNNMVMSEKNDQVVSIVQQLAGSIYQEFERMINRYDEDVVKNLMPLLVNVLECLDASYRINQEQDVELELLREDNEQLVTQYEREKSARKQSEQKLLEAEDLAEQENKELATRLESVESIVRMLELKHKNSLEHASRLEERETDLKKEYNKLHERYTELFKNHVDYMERTKMLMGSTHSQMSTASDRMEVSRARLNPVARSSGPVSYGFASLENSVMLDTETICSVGSQSDDSGPPSLQNELDMSLPSTAERGAATDSLQQQHQATSPQSPPDTSPVVPNVPPANVGRSTTKKEQRSDNNLYQELSFQDNEESEENEIVTGCWVHPGEYASSANDNYFGMGKEVENLIMENNELLATKNALNIVKDDLIVKVDELTGEVEIVREELSAMQQSRTKLRQRISELEEELKKTKEQVKQQNTEQEENDVPLAQRKRFTRVEMAMVLMERNQYKERLMELQEAVRLTEILRASRTVDNLDKKSKQSIWKYFSNLFTPSNRPTERIADGLGGGPMFRNTGGGSPAHSHGSPSRGSGDNRLTLAGSQPPMHPASAGLANALVMPKDYSEDGGSERISARRREQYRQLRAHVQKEDGRLHAYGWSLPINKANQEANPSRHSGGVPVPVYCNPLAEASPHMKVFCAAGVNLHGGFTKDGQSLIPADSPYAPKSTLKITEITSPTAEQSVEALDRQIARASLETLEPETQLSSFVWICTSTHAASTVSVVDANQSATVLDAFPICSSHLLCIASVQGAMESDYALLEQSEVVKAGEMLQRPGEGTELLGKVEFVRVKPKSEDEQNSNSKPQQQQQDEEEAKEATEKSNEPLPPVNAEEPLVNVEAIKIRQALPGAPQRLSSGNSGSDGNQANNNNSSSTGSVLFATKSLNPILGTKEREDPPMTSVGPTMWMGAQDGWLYVHSGVGRWHECLHRVLLPDAVLAIVHVEARVVVALANAQLAVFRRQTDGQWDLNSYHLVTLGDRNHSIRCLCVAGERIWAAHRNKIFIVDPISLNIVHSLDAHPRKESQVRQMAATGAGVWVSIRLDSTLRLYNTHTFEHKQDVDIEPYVSKMLGTGKLGFSFVRITALMVSCNRLWIGTSNGVIISVPLAEVQQKTSSDPHGQMPLCCMANAQLSFHGHRDAVKFFVSVPMLQQPNLNGGLTFVNKRPDMLVMCGGEGYIDFRINDNDMENSIQLEPNQTIENRGDKSYLIVWHVSQR.

The disordered stretch occupies residues 1–22 (MMDNDDALLNNGGPQSGAETVY). Residues 25 to 113 (EDNNMVMSEK…VTQYEREKSA (89 aa)) enclose the RH1 domain. Positions 84–184 (RINQEQDVEL…NKLHERYTEL (101 aa)) form a coiled coil. The segment at 278–325 (GAATDSLQQQHQATSPQSPPDTSPVVPNVPPANVGRSTTKKEQRSDNN) is disordered. Residues 282–293 (DSLQQQHQATSP) show a composition bias toward polar residues. The span at 294-307 (QSPPDTSPVVPNVP) shows a compositional bias: pro residues. The stretch at 366–493 (GKEVENLIME…AVRLTEILRA (128 aa)) forms a coiled coil. Residues 456–526 (RKRFTRVEMA…TPSNRPTERI (71 aa)) enclose the RH2 domain. 3 disordered regions span residues 520–572 (NRPT…MHPA), 813–852 (KPKS…PVNA), and 869–897 (PGAP…STGS). A compositionally biased stretch (gly residues) spans 529-543 (GLGGGPMFRNTGGGS). Composition is skewed to low complexity over residues 544–555 (PAHSHGSPSRGS) and 821–830 (NSNSKPQQQQ). A compositionally biased stretch (polar residues) spans 874–897 (RLSSGNSGSDGNQANNNNSSSTGS).

It belongs to the JIP scaffold family. In terms of assembly, forms homo- and heterooligomeric complexes. Binds the TPR motif-containing C-terminal of kinesin light chain, Klc. Pre-assembled syd scaffolding complexes are then transported as a cargo of kinesin, to the required subcellular location.

The protein localises to the cytoplasm. In terms of biological role, the JNK-interacting protein (JIP) group of scaffold proteins selectively mediates JNK-signaling by aggregating specific components of the MAPK cascade to form a functional JNK signaling module. May function as a regulator of vesicle transport, through interactions with the JNK-signaling components and motor proteins. Syd is required for efficient kinesin-I mediated axonal transport. This Drosophila pseudoobscura pseudoobscura (Fruit fly) protein is JNK-interacting protein 3.